The following is a 185-amino-acid chain: Ribosome-recycling factor (185 aa).

Belongs to the RRF family.

The protein resides in the cytoplasm. In terms of biological role, responsible for the release of ribosomes from messenger RNA at the termination of protein biosynthesis. May increase the efficiency of translation by recycling ribosomes from one round of translation to another. The sequence is that of Ribosome-recycling factor from Shewanella frigidimarina (strain NCIMB 400).